The chain runs to 410 residues: Protein CNPPD1 (410 aa).

Residues 233-253 (CLLAVAYVSSVALAVASVAVI) traverse the membrane as a helical segment.

It belongs to the CNPPD1 family.

It localises to the membrane. This Homo sapiens (Human) protein is Protein CNPPD1 (CNPPD1).